The chain runs to 365 residues: Phosphate acyltransferase (365 aa).

Belongs to the PlsX family. In terms of assembly, homodimer. Probably interacts with PlsY.

The protein resides in the cytoplasm. It carries out the reaction a fatty acyl-[ACP] + phosphate = an acyl phosphate + holo-[ACP]. Its pathway is lipid metabolism; phospholipid metabolism. In terms of biological role, catalyzes the reversible formation of acyl-phosphate (acyl-PO(4)) from acyl-[acyl-carrier-protein] (acyl-ACP). This enzyme utilizes acyl-ACP as fatty acyl donor, but not acyl-CoA. This is Phosphate acyltransferase from Picosynechococcus sp. (strain ATCC 27264 / PCC 7002 / PR-6) (Agmenellum quadruplicatum).